A 555-amino-acid chain; its full sequence is Vetispiradiene synthase 1 (555 aa).

Residues D308, D312, D451, T455, and E459 each coordinate Mg(2+). The DDXXD motif signature appears at 308-312; the sequence is DDTFD.

It belongs to the terpene synthase family. Tpsa subfamily. It depends on Mg(2+) as a cofactor.

Its subcellular location is the cytoplasm. The enzyme catalyses (2E,6E)-farnesyl diphosphate = (-)-vetispiradiene + diphosphate. The protein operates within secondary metabolite biosynthesis; terpenoid biosynthesis. Functionally, sesquiterpene synthase that catalyzes the formation of vetispiradiene from trans,trans-farnesyl diphosphate. The initial internal cyclization produces the monocyclic intermediate germacrene A. In Hyoscyamus muticus (Egyptian henbane), this protein is Vetispiradiene synthase 1.